The sequence spans 426 residues: Histidine--tRNA ligase (426 aa).

This sequence belongs to the class-II aminoacyl-tRNA synthetase family. As to quaternary structure, homodimer.

It localises to the cytoplasm. It carries out the reaction tRNA(His) + L-histidine + ATP = L-histidyl-tRNA(His) + AMP + diphosphate + H(+). In Streptococcus equi subsp. zooepidemicus (strain H70), this protein is Histidine--tRNA ligase.